Consider the following 233-residue polypeptide: MLSVSGLTKRYGDERALDDVSVDLQRGELTVLVGRSGAGKTTLLRCLDGLEQPDDGTIELDGRAPATTDVALVFQAGALVDSKSALSNVLDGALGRLPSWRELLGVYPADEKRAAIARLHDVGLGGYADRRVGTLSGGQRQRVGIARALQQEPAVLLADEPVASLDPETGRDVLERVAAVVRDDDLIGVVSLHQPRLAEPIADRYLGLADGRLVLDRPAAALDREDITAVYDD.

The 226-residue stretch at 2 to 227 (LSVSGLTKRY…PAAALDREDI (226 aa)) folds into the ABC transporter domain. 34-41 (GRSGAGKT) is an ATP binding site.

It belongs to the ABC transporter superfamily. Phosphonates importer (TC 3.A.1.9.1) family. In terms of assembly, the complex is composed of two ATP-binding proteins (PhnC), two transmembrane proteins (PhnE) and a solute-binding protein (PhnD).

It localises to the cell membrane. It catalyses the reaction phosphonate(out) + ATP + H2O = phosphonate(in) + ADP + phosphate + H(+). In terms of biological role, part of the ABC transporter complex PhnCDE involved in phosphonates import. Responsible for energy coupling to the transport system. In Natronomonas pharaonis (strain ATCC 35678 / DSM 2160 / CIP 103997 / JCM 8858 / NBRC 14720 / NCIMB 2260 / Gabara) (Halobacterium pharaonis), this protein is Phosphonates import ATP-binding protein PhnC 1.